A 631-amino-acid chain; its full sequence is Translation factor GUF1, mitochondrial (631 aa).

The transit peptide at 1-19 (MFNRRLLRHVRYAFQQVRS) directs the protein to the mitochondrion. Residues 33–214 (ERYRNFSIVA…AIVDRIPPPT (182 aa)) enclose the tr-type G domain. Residues 42–49 (AHVDHGKS), 107–111 (DTPGH), and 161–164 (NKID) each bind GTP.

The protein belongs to the TRAFAC class translation factor GTPase superfamily. Classic translation factor GTPase family. LepA subfamily.

The protein resides in the mitochondrion inner membrane. It catalyses the reaction GTP + H2O = GDP + phosphate + H(+). Its function is as follows. Promotes mitochondrial protein synthesis. May act as a fidelity factor of the translation reaction, by catalyzing a one-codon backward translocation of tRNAs on improperly translocated ribosomes. Binds to mitochondrial ribosomes in a GTP-dependent manner. The protein is Translation factor GUF1, mitochondrial of Kluyveromyces lactis (strain ATCC 8585 / CBS 2359 / DSM 70799 / NBRC 1267 / NRRL Y-1140 / WM37) (Yeast).